The sequence spans 375 residues: MYSLLETELKNPVGPPTPAAGTGVPAAPGAAGKSGANPAGGANAGNGGSGGANGGGGGGGGGGSDQDRVKRPMNAFMVWSRGQRRKMALENPKMHNSEISKRLGADWKLLTDAEKRPFIDEAKRLRAVHMKEYPDYKYRPRRKTKTLLKKDKYSLPGGLLPPGAAAAAAAAAAAAAASSPVGVGQRLDTYTHVNGWANGAYSLVQEQLGYAQPPSMSSPPPPPALPQMHRYDMAGLQYSPMMPPGAQSYMNAAAAAAAASGYGGMAPSAAAAAAAAYGQQPATAAAAAAAAAAMSLGPMGSVVKSEPSSPPPAIASHSQRACLGDLRDMISMYLPPGGDAADAASPLPGGRLHGVHQHYQGAGTAVNGTVPLTHI.

Residues 1–69 (MYSLLETELK…GGGGSDQDRV (69 aa)) are disordered. Over residues 19 to 41 (AAGTGVPAAPGAAGKSGANPAGG) the composition is skewed to low complexity. The segment covering 42 to 64 (ANAGNGGSGGANGGGGGGGGGGS) has biased composition (gly residues). The HMG box DNA-binding region spans 69–137 (VKRPMNAFMV…VHMKEYPDYK (69 aa)). The short motif at 325–336 (DLRDMISMYLPP) is the 9aaTAD element.

In terms of assembly, interacts with SOX2 and FGFR1. Expressed in developing parathyroids of mouse embryos between 10.5 and 15.5 days post-coitum. Expressed in the developing central nervous system. Expressed in the developing urogenital ridge.

It localises to the nucleus. Transcription factor required during the formation of the hypothalamo-pituitary axis. May function as a switch in neuronal development. Keeps neural cells undifferentiated by counteracting the activity of proneural proteins and suppresses neuronal differentiation. Required also within the pharyngeal epithelia for craniofacial morphogenesis. Controls a genetic switch in male development. Is necessary for initiating male sex determination by directing the development of supporting cell precursors (pre-Sertoli cells) as Sertoli rather than granulosa cells. The polypeptide is Transcription factor SOX-3 (Sox3) (Mus musculus (Mouse)).